A 373-amino-acid chain; its full sequence is MRLSDFDFHLPDAAIALRPAEPRDSARLLVVRPGEGLEDRIVRDLPDFLRPGDALVFNDTRVIPARLMGRRAGRETGGGDGSPVAVEATLHRRIAPDRWVAFMRPGKRLKEGDRIAFGHDQDRACQAGMLDATVIAKHEGGEIELAFDFAGVDLDLAVAAHGEMPLPPYIAAKRAEDDRDRADYQTVYAREDGSVAAPTAGLHFTSDLLERLKAGGVSLHFVTLHVGAGTFLPVKTDVVADHKMHAEFGEVPAAVADALNAARAAGGRIVCVGTTSLRLLESATGEDRIIKPFADETAIFITPGYRFRAADVLMTNFHLPKSTLFMLVSAFAGQATMKAAYEHAIAAGYRFYSYGDGSLLFRAATDENGSEQS.

It belongs to the QueA family. As to quaternary structure, monomer.

Its subcellular location is the cytoplasm. The enzyme catalyses 7-aminomethyl-7-carbaguanosine(34) in tRNA + S-adenosyl-L-methionine = epoxyqueuosine(34) in tRNA + adenine + L-methionine + 2 H(+). Its pathway is tRNA modification; tRNA-queuosine biosynthesis. Its function is as follows. Transfers and isomerizes the ribose moiety from AdoMet to the 7-aminomethyl group of 7-deazaguanine (preQ1-tRNA) to give epoxyqueuosine (oQ-tRNA). This chain is S-adenosylmethionine:tRNA ribosyltransferase-isomerase, found in Caulobacter sp. (strain K31).